The sequence spans 221 residues: Keratin-associated protein 10-3 (221 aa).

Tandem repeats lie at residues 26-30 (CCEPP), 31-35 (CCATS), 36-40 (CCAPA), 57-61 (CCQAA), 79-83 (CCQQS), 89-93 (CCTSS), 99-103 (CCVPV), 104-108 (CCKPV), 109-113 (CCVPV), 114-118 (CCKPV), 119-123 (CCKPI), 124-128 (CCVPV), 136-140 (CCQQS), 146-150 (CCTTS), 151-155 (CCRPS), 177-181 (CCAPA), 188-192 (CCRPA), and 210-214 (CCGLS). The 18 X 5 AA repeats of C-C-X(3) stretch occupies residues 26–214 (CCEPPCCATS…RLSSACCGLS (189 aa)).

It belongs to the KRTAP type 10 family. Interacts with hair keratins. In terms of tissue distribution, restricted to a narrow region of the hair fiber cuticle, lying approximately 20 cell layers above the apex of the dermal papilla of the hair root; not detected in any other tissues.

Its function is as follows. In the hair cortex, hair keratin intermediate filaments are embedded in an interfilamentous matrix, consisting of hair keratin-associated proteins (KRTAP), which are essential for the formation of a rigid and resistant hair shaft through their extensive disulfide bond cross-linking with abundant cysteine residues of hair keratins. The matrix proteins include the high-sulfur and high-glycine-tyrosine keratins. The protein is Keratin-associated protein 10-3 (KRTAP10-3) of Homo sapiens (Human).